The following is a 91-amino-acid chain: Small ribosomal subunit protein uS19 (91 aa).

Belongs to the universal ribosomal protein uS19 family.

Functionally, protein S19 forms a complex with S13 that binds strongly to the 16S ribosomal RNA. The chain is Small ribosomal subunit protein uS19 from Pseudomonas syringae pv. syringae (strain B728a).